Consider the following 285-residue polypeptide: 3-methyl-2-oxobutanoate hydroxymethyltransferase 1 (285 aa).

Mg(2+)-binding residues include D49 and D88. 3-methyl-2-oxobutanoate contacts are provided by residues 49-50, D88, and K118; that span reads DS. E120 contacts Mg(2+). The active-site Proton acceptor is E187.

The protein belongs to the PanB family. Homodecamer; pentamer of dimers. Mg(2+) serves as cofactor.

The protein resides in the cytoplasm. It catalyses the reaction 3-methyl-2-oxobutanoate + (6R)-5,10-methylene-5,6,7,8-tetrahydrofolate + H2O = 2-dehydropantoate + (6S)-5,6,7,8-tetrahydrofolate. Its pathway is cofactor biosynthesis; (R)-pantothenate biosynthesis; (R)-pantoate from 3-methyl-2-oxobutanoate: step 1/2. Its function is as follows. Catalyzes the reversible reaction in which hydroxymethyl group from 5,10-methylenetetrahydrofolate is transferred onto alpha-ketoisovalerate to form ketopantoate. This is 3-methyl-2-oxobutanoate hydroxymethyltransferase 1 from Burkholderia lata (strain ATCC 17760 / DSM 23089 / LMG 22485 / NCIMB 9086 / R18194 / 383).